The primary structure comprises 245 residues: Phosphoribosylaminoimidazole-succinocarboxamide synthase (245 aa).

It belongs to the SAICAR synthetase family.

It carries out the reaction 5-amino-1-(5-phospho-D-ribosyl)imidazole-4-carboxylate + L-aspartate + ATP = (2S)-2-[5-amino-1-(5-phospho-beta-D-ribosyl)imidazole-4-carboxamido]succinate + ADP + phosphate + 2 H(+). It functions in the pathway purine metabolism; IMP biosynthesis via de novo pathway; 5-amino-1-(5-phospho-D-ribosyl)imidazole-4-carboxamide from 5-amino-1-(5-phospho-D-ribosyl)imidazole-4-carboxylate: step 1/2. This chain is Phosphoribosylaminoimidazole-succinocarboxamide synthase, found in Nostoc punctiforme (strain ATCC 29133 / PCC 73102).